A 400-amino-acid polypeptide reads, in one-letter code: Cytohesin-2 (400 aa).

Positions 10-67 (DLTPEERMELENIRRRKQELLVEIQRLREELSEAMSEVEGLEANEGSKTLQRNRKMAM) form a coiled coil. The region spanning 72–201 (FNMDPKKGIQ…VIMLNTSLHN (130 aa)) is the SEC7 domain. One can recognise a PH domain in the interval 259-376 (NPDREGWLLK…WIKSIQAAVS (118 aa)). Residues 268–276 (KLGGGRVKT), arginine 280, tyrosine 291, arginine 301, lysine 339, asparagine 350, and histidine 351 contribute to the a 1,2-diacyl-sn-glycero-3-phospho-(1D-myo-inositol-3,4,5-trisphosphate) site. Residues 387 to 395 (RKKRISVKK) form a C-terminal autoinhibitory region region.

In terms of assembly, heteromer. Composed of TAMALIN, CYTH2 and at least one GRM1. Interacts with ARRB1. Interacts with ARL4D; the interaction is direct. Directly interacts with CCDC120 through the coiled coil domain; this interaction stabilizes CCDC120, possibly by preventing its ubiquitination, and is required for neurite growth in a neuroblastoma cell line. Interacts with FRMD4A. Interacts (via N-terminal domain) with INAVA (via N-terminal domain). In terms of tissue distribution, present in all tissues tested, with highest protein levels in brain and adrenal.

The protein resides in the cell membrane. It is found in the cytoplasm. The protein localises to the cell projection. Its subcellular location is the growth cone. It localises to the cell junction. The protein resides in the tight junction. It is found in the adherens junction. Its function is as follows. Acts as a guanine-nucleotide exchange factor (GEF). Promotes guanine-nucleotide exchange on ARF1, ARF3 and ARF6. Activates ARF factors through replacement of GDP with GTP. The cell membrane form, in association with ARL4 proteins, recruits ARF6 to the plasma membrane. Involved in neurite growth. In Mus musculus (Mouse), this protein is Cytohesin-2 (Cyth2).